The following is a 98-amino-acid chain: Large ribosomal subunit protein uL23 (98 aa).

It belongs to the universal ribosomal protein uL23 family. As to quaternary structure, part of the 50S ribosomal subunit. Contacts protein L29, and trigger factor when it is bound to the ribosome.

In terms of biological role, one of the early assembly proteins it binds 23S rRNA. One of the proteins that surrounds the polypeptide exit tunnel on the outside of the ribosome. Forms the main docking site for trigger factor binding to the ribosome. This chain is Large ribosomal subunit protein uL23, found in Clostridium kluyveri (strain NBRC 12016).